The following is a 353-amino-acid chain: RNA replication protein (353 aa).

The region spanning 137–244 is the RdRp catalytic domain; it reads GVCTESDYEA…NRALFIKDTH (108 aa).

The protein belongs to the potexviruses/carlaviruses RNA replication protein family.

It carries out the reaction RNA(n) + a ribonucleoside 5'-triphosphate = RNA(n+1) + diphosphate. The catalysed reaction is ATP + H2O = ADP + phosphate + H(+). Functionally, RNA replication. The central part of this protein possibly functions as an ATP-binding helicase. This is RNA replication protein from Potato virus S (strain Peruvian).